We begin with the raw amino-acid sequence, 1530 residues long: Glutamate-rich protein 3 (1530 aa).

9 disordered regions span residues 165 to 187 (RLQPLPSNPAVETVPKVTSRSRS), 408 to 429 (SLPKSRKEKSTEKGEELKKAEG), 475 to 661 (MTSK…PMPI), 673 to 724 (TEKG…GLEE), 773 to 870 (EAME…AVGL), 923 to 1146 (REAA…LLGE), 1167 to 1334 (LENI…GMGG), 1360 to 1383 (LAGSETAEEKTIANKASSFSDVAE), and 1425 to 1530 (YTTE…NVQV). Composition is skewed to basic and acidic residues over residues 415–429 (EKSTEKGEELKKAEG), 531–545 (LDDKKDNLDPEKESE), and 552–562 (PDARDNVKDEN). Acidic residues predominate over residues 563–574 (DGCSESELEEDK). Positions 581–592 (SSTSSRSHPYSS) are enriched in low complexity. Basic and acidic residues predominate over residues 600–616 (VGDREAHTDSSTDESAR). Residues 638-647 (ESLEIEIEDQ) are compositionally biased toward acidic residues. Basic and acidic residues-rich tracts occupy residues 684–717 (LSEKSGKHVSAEEKEKDKSKLWEESTAQVKDKKA) and 773–787 (EAMEEDEAPQHRDAD). The span at 834–845 (GIERGAEGAAEA) shows a compositional bias: low complexity. Over residues 943–958 (GESEEEASIDLEDTGP) the composition is skewed to acidic residues. Basic and acidic residues-rich tracts occupy residues 979–992 (EPAKERKEVMRTET), 1039–1116 (EANR…EETK), and 1173–1212 (LRKEGGGERLSEARDTEHKDREELSSRENRALKEGHRQDG). The span at 1213–1225 (EGALAAPEAEPAG) shows a compositional bias: low complexity. A compositionally biased stretch (acidic residues) spans 1289–1300 (AVDEDPEEEEDK). 2 stretches are compositionally biased toward basic and acidic residues: residues 1464 to 1487 (GRQETGAAEKFRLGLSREGERELS) and 1502 to 1511 (DFTETREKQQ). Positions 1517–1530 (ESETADVSPNNVQV) are enriched in polar residues.

Interacts with CLTC/clathrin heavy chain 1, AP2A2/AP-2 complex subunit alpha-2, and PIK3C2A/phosphatidylinositol 4-phosphate 3-kinase C2 domain-containing subunit alpha. In terms of tissue distribution, expressed in dopaminergic and serotoninergic neurons.

Its subcellular location is the cell projection. The protein resides in the cilium. The protein localises to the cytoplasm. Component of the primary cilium that controls cilium formation and length. May function within retrograde intraflagellar transport (IFT)-associated pathways to remove signaling proteins from primary cilia. Also involved in neuronal vesicle biogenesis and neurotransmitter vesicular function. In Homo sapiens (Human), this protein is Glutamate-rich protein 3.